A 405-amino-acid polypeptide reads, in one-letter code: Accessory Sec system protein translocase subunit SecY2 (405 aa).

The next 10 membrane-spanning stretches (helical) occupy residues 14 to 34 (MCTLFLLFIYVLGSRIALPFV), 65 to 85 (LFSIGLSPWMSAMILWQMFSF), 104 to 124 (MYLTLGIALIQALALTTNLPV), 131 to 151 (FLVFLLNTSLLVAGTFFLVWL), 156 to 176 (ATIGVGGPVVILLASMVASLP), 190 to 210 (LGLLFLLLVLGVLFTYLVVLF), 243 to 263 (GMPYMYVMSLMGLPSYLLLLL), 285 to 305 (PLWIYAYILILFVFSIAFAFV), 343 to 363 (FALIGAVFNVTLAGVPILFVL), and 368 to 388 (LLKVSMIPGLFLILSGMLFTI).

Belongs to the SecY/SEC61-alpha family. SecY2 subfamily. As to quaternary structure, component of the accessory SecA2/SecY2 protein translocase complex required to export cell wall proteins. May form heterotrimers with SecE and SecG subunits.

The protein resides in the cell membrane. Functionally, part of the accessory SecA2/SecY2 system specifically required for export of possible cell wall proteins. The central subunit of a protein translocation channel. The sequence is that of Accessory Sec system protein translocase subunit SecY2 from Streptococcus oralis (strain Uo5).